A 58-amino-acid chain; its full sequence is Large ribosomal subunit protein uL30 (58 aa).

It belongs to the universal ribosomal protein uL30 family. As to quaternary structure, part of the 50S ribosomal subunit.

The sequence is that of Large ribosomal subunit protein uL30 from Pseudomonas aeruginosa (strain LESB58).